A 688-amino-acid chain; its full sequence is T-box transcription factor TBX2-A (688 aa).

The segment at residues 104–277 (LWDQFHKIGT…NNPFAKGFRD (174 aa)) is a DNA-binding region (T-box). 2 disordered regions span residues 301 to 436 (CKAD…GSLS) and 606 to 688 (PSTN…ETPK). Composition is skewed to basic and acidic residues over residues 340–361 (NNRE…EIRS), 378–403 (RLED…KDGS), and 412–430 (SLEK…KSDP). A compositionally biased stretch (low complexity) spans 621 to 636 (PGSESSKPGSSRESSP). The stretch at 655–679 (ASMKDSINELQNIQRLVSGLESQRE) forms a coiled coil. A compositionally biased stretch (basic and acidic residues) spans 676 to 688 (SQREISPGRETPK).

Binds DNA as a monomer.

Its subcellular location is the nucleus. In terms of biological role, transcription factor which acts as a transcriptional repressor. May also function as a transcriptional activator. Binds to the palindromic T site 5'-TTCACACCTAGGTGTGAA-3' DNA sequence, or a half-site, which are present in the regulatory region of several genes. This Xenopus laevis (African clawed frog) protein is T-box transcription factor TBX2-A (tbx2-a).